Consider the following 246-residue polypeptide: 1-(5-phosphoribosyl)-5-[(5-phosphoribosylamino)methylideneamino] imidazole-4-carboxamide isomerase (246 aa).

Catalysis depends on aspartate 7, which acts as the Proton acceptor. Catalysis depends on aspartate 129, which acts as the Proton donor.

It belongs to the HisA/HisF family.

The protein resides in the cytoplasm. The catalysed reaction is 1-(5-phospho-beta-D-ribosyl)-5-[(5-phospho-beta-D-ribosylamino)methylideneamino]imidazole-4-carboxamide = 5-[(5-phospho-1-deoxy-D-ribulos-1-ylimino)methylamino]-1-(5-phospho-beta-D-ribosyl)imidazole-4-carboxamide. Its pathway is amino-acid biosynthesis; L-histidine biosynthesis; L-histidine from 5-phospho-alpha-D-ribose 1-diphosphate: step 4/9. This is 1-(5-phosphoribosyl)-5-[(5-phosphoribosylamino)methylideneamino] imidazole-4-carboxamide isomerase from Shewanella sediminis (strain HAW-EB3).